The chain runs to 593 residues: Aspartate--tRNA(Asp/Asn) ligase (593 aa).

Glu-173 is an L-aspartate binding site. Positions 197–200 (QLFK) are aspartate. Residue Arg-219 participates in L-aspartate binding. ATP-binding positions include 219–221 (RDE) and Gln-228. Residue His-451 participates in L-aspartate binding. Glu-485 provides a ligand contact to ATP. Arg-492 serves as a coordination point for L-aspartate. Position 537–540 (537–540 (GIDR)) interacts with ATP.

The protein belongs to the class-II aminoacyl-tRNA synthetase family. Type 1 subfamily. In terms of assembly, homodimer.

It is found in the cytoplasm. The enzyme catalyses tRNA(Asx) + L-aspartate + ATP = L-aspartyl-tRNA(Asx) + AMP + diphosphate. In terms of biological role, aspartyl-tRNA synthetase with relaxed tRNA specificity since it is able to aspartylate not only its cognate tRNA(Asp) but also tRNA(Asn). Reaction proceeds in two steps: L-aspartate is first activated by ATP to form Asp-AMP and then transferred to the acceptor end of tRNA(Asp/Asn). The chain is Aspartate--tRNA(Asp/Asn) ligase from Legionella pneumophila subsp. pneumophila (strain Philadelphia 1 / ATCC 33152 / DSM 7513).